The following is a 354-amino-acid chain: 4-hydroxy-2-oxovalerate aldolase 6 (354 aa).

One can recognise a Pyruvate carboxyltransferase domain in the interval 10–262 (VRIVDTTLRD…ATGLDVMATL (253 aa)). 18–19 (RD) lines the substrate pocket. Asp-19 contacts Mn(2+). Catalysis depends on His-22, which acts as the Proton acceptor. Residues Ser-172 and His-201 each contribute to the substrate site. 2 residues coordinate Mn(2+): His-201 and His-203. Tyr-292 lines the substrate pocket.

Belongs to the 4-hydroxy-2-oxovalerate aldolase family.

The enzyme catalyses (S)-4-hydroxy-2-oxopentanoate = acetaldehyde + pyruvate. The sequence is that of 4-hydroxy-2-oxovalerate aldolase 6 from Rhodococcus jostii (strain RHA1).